We begin with the raw amino-acid sequence, 473 residues long: Cephalotoxin-like protein (473 aa).

The first 21 residues, 1-21, serve as a signal peptide directing secretion; it reads RWLGWQKFCWISCLFSSISSG. 2 coiled-coil regions span residues 40-60 and 116-147; these read AINA…EALK and LINE…ADTA.

In terms of tissue distribution, component of the acid-insoluble and acid-soluble organic matrix of the aragonitic skeleton (at protein level).

It localises to the secreted. In Acropora millepora (Staghorn coral), this protein is Cephalotoxin-like protein.